The primary structure comprises 376 residues: Transcription factor Sp6 (376 aa).

The tract at residues 1-70 (MLTAVCGSLG…VDFSQGYELP (70 aa)) is disordered. The short motif at 118-126 (GSWWDLHPG) is the 9aaTAD element. A disordered region spans residues 167–223 (HPHAHHLLPAAGGQHLLGPPDGAKALEVAAPESQGLDSSLDGAARPKGSRRSVPRSS). The span at 173–186 (LLPAAGGQHLLGPP) shows a compositional bias: low complexity. 3 C2H2-type zinc fingers span residues 254-278 (HNCH…LRWH), 284-308 (FVCN…LQTH), and 314-336 (FPCA…MKTH). Over residues 333–343 (MKTHEGAKEEA) the composition is skewed to basic and acidic residues. The tract at residues 333-376 (MKTHEGAKEEAAGAASGEGKAGGAVEPPGGKGKREAEGSVAPSN) is disordered.

This sequence belongs to the Sp1 C2H2-type zinc-finger protein family. In terms of tissue distribution, ubiquitous.

The protein resides in the nucleus. Its function is as follows. Promotes cell proliferation. Plays a role in tooth germ growth. Plays a role in the control of enamel mineralization. Binds the AMBN promoter. This Homo sapiens (Human) protein is Transcription factor Sp6 (SP6).